Consider the following 443-residue polypeptide: Xaa-Pro dipeptidase (443 aa).

Positions 246, 257, 339, 384, and 423 each coordinate Mn(2+).

The protein belongs to the peptidase M24B family. Bacterial-type prolidase subfamily. Mn(2+) serves as cofactor.

It carries out the reaction Xaa-L-Pro dipeptide + H2O = an L-alpha-amino acid + L-proline. Its function is as follows. Splits dipeptides with a prolyl residue in the C-terminal position. This is Xaa-Pro dipeptidase from Escherichia coli O8 (strain IAI1).